Consider the following 442-residue polypeptide: Endothelin receptor type B (442 aa).

A signal peptide spans Met-1 to Gly-26. Residues Glu-27–Lys-101 are Extracellular-facing. Asn-59 carries an N-linked (GlcNAc...) asparagine glycan. The tract at residues Ala-69–Pro-88 is disordered. The chain crosses the membrane as a helical span at residues Tyr-102–Ile-126. Topologically, residues Tyr-127–Asn-137 are cytoplasmic. A helical membrane pass occupies residues Ile-138 to Leu-163. The Extracellular portion of the chain corresponds to Ala-164–Lys-175. Cys-174 and Cys-255 are joined by a disulfide. The chain crosses the membrane as a helical span at residues Leu-176–Ile-197. Topologically, residues Asp-198 to Thr-218 are cytoplasmic. The chain crosses the membrane as a helical span at residues Ala-219–Ile-243. The Extracellular segment spans residues Thr-244–Thr-271. The chain crosses the membrane as a helical span at residues Ala-272–Met-296. Residues Thr-297 to Thr-324 lie on the Cytoplasmic side of the membrane. Ser-305 is modified (phosphoserine). The helical transmembrane segment at Val-325–Tyr-350 threads the bilayer. Topologically, residues Asn-351–Ser-362 are extracellular. The helical transmembrane segment at Phe-363–Val-389 threads the bilayer. Residues Ser-390 to Ser-442 are Cytoplasmic-facing. S-palmitoyl cysteine attachment occurs at residues Cys-402, Cys-403, and Cys-405. Ser-419 is subject to Phosphoserine. Phosphotyrosine is present on Tyr-439. Phosphoserine occurs at positions 440, 441, and 442.

This sequence belongs to the G-protein coupled receptor 1 family. Endothelin receptor subfamily. EDNRB sub-subfamily. Palmitoylation of Cys-402 was confirmed by the palmitoylation of Cys-402 in a deletion mutant lacking both Cys-403 and Cys-405. As to expression, expressed in placental stem villi vessels, but not in cultured placental villi smooth muscle cells.

Its subcellular location is the cell membrane. Functionally, non-specific receptor for endothelin 1, 2, and 3. Mediates its action by association with G proteins that activate a phosphatidylinositol-calcium second messenger system. This is Endothelin receptor type B from Homo sapiens (Human).